The chain runs to 1958 residues: Probable Rho GTPase-activating protein CG5521 (1958 aa).

Disordered stretches follow at residues 1 to 21 (MFTK…QDSK), 400 to 424 (PPFL…RSQR), and 635 to 804 (GSVW…GIEG). Positions 400-414 (PPFLLEPNDDPPPPS) are enriched in pro residues. The span at 640–656 (GSGSNSAANGGSAASAA) shows a compositional bias: low complexity. 3 positions are modified to phosphoserine: S718, S764, and S767. A compositionally biased stretch (basic and acidic residues) spans 758-774 (DLRRAMSLDSLARKGDA). Positions 775–785 (EETDSYQEGDN) are enriched in acidic residues. Residues S787, S791, S793, and S795 each carry the phosphoserine modification. Polar residues predominate over residues 788–800 (GAGSRSPSPTASS). Y980 carries the post-translational modification Phosphotyrosine. Residues 1534–1568 (HSTQAPSPALRHASSNSSLQQPDQRSLHSTTASFD) form a disordered region. Residues 1546-1568 (ASSNSSLQQPDQRSLHSTTASFD) show a composition bias toward polar residues. Phosphoserine is present on S1551. A Rap-GAP domain is found at 1612–1819 (LRNVDLQKCR…EERNRSLDSV (208 aa)). Residues 1903–1958 (ATGMSSASPRGPRKLGAPFKSVTKKHSLQHIAVGGGAGAGGDTPPESPTLPQRRFK) form a disordered region. Residue T1945 is modified to Phosphothreonine. Phosphoserine is present on S1949.

The sequence is that of Probable Rho GTPase-activating protein CG5521 from Drosophila melanogaster (Fruit fly).